A 619-amino-acid chain; its full sequence is 1-deoxy-D-xylulose-5-phosphate synthase (619 aa).

Residues His63 and 104–106 (GHS) contribute to the thiamine diphosphate site. A Mg(2+)-binding site is contributed by Asp136. Residues 137–138 (GS), Asn165, Tyr272, and Glu353 each bind thiamine diphosphate. Residue Asn165 participates in Mg(2+) binding.

This sequence belongs to the transketolase family. DXPS subfamily. Homodimer. Mg(2+) serves as cofactor. It depends on thiamine diphosphate as a cofactor.

The catalysed reaction is D-glyceraldehyde 3-phosphate + pyruvate + H(+) = 1-deoxy-D-xylulose 5-phosphate + CO2. It functions in the pathway metabolic intermediate biosynthesis; 1-deoxy-D-xylulose 5-phosphate biosynthesis; 1-deoxy-D-xylulose 5-phosphate from D-glyceraldehyde 3-phosphate and pyruvate: step 1/1. In terms of biological role, catalyzes the acyloin condensation reaction between C atoms 2 and 3 of pyruvate and glyceraldehyde 3-phosphate to yield 1-deoxy-D-xylulose-5-phosphate (DXP). This Wolinella succinogenes (strain ATCC 29543 / DSM 1740 / CCUG 13145 / JCM 31913 / LMG 7466 / NCTC 11488 / FDC 602W) (Vibrio succinogenes) protein is 1-deoxy-D-xylulose-5-phosphate synthase.